The chain runs to 356 residues: UDP-N-acetylglucosamine--N-acetylmuramyl-(pentapeptide) pyrophosphoryl-undecaprenol N-acetylglucosamine transferase (356 aa).

UDP-N-acetyl-alpha-D-glucosamine contacts are provided by Arg-166, Ser-196, and Gln-290.

Belongs to the glycosyltransferase 28 family. MurG subfamily.

The protein resides in the cell membrane. It catalyses the reaction Mur2Ac(oyl-L-Ala-gamma-D-Glu-L-Lys-D-Ala-D-Ala)-di-trans,octa-cis-undecaprenyl diphosphate + UDP-N-acetyl-alpha-D-glucosamine = beta-D-GlcNAc-(1-&gt;4)-Mur2Ac(oyl-L-Ala-gamma-D-Glu-L-Lys-D-Ala-D-Ala)-di-trans,octa-cis-undecaprenyl diphosphate + UDP + H(+). It functions in the pathway cell wall biogenesis; peptidoglycan biosynthesis. In terms of biological role, cell wall formation. Catalyzes the transfer of a GlcNAc subunit on undecaprenyl-pyrophosphoryl-MurNAc-pentapeptide (lipid intermediate I) to form undecaprenyl-pyrophosphoryl-MurNAc-(pentapeptide)GlcNAc (lipid intermediate II). In Staphylococcus aureus (strain bovine RF122 / ET3-1), this protein is UDP-N-acetylglucosamine--N-acetylmuramyl-(pentapeptide) pyrophosphoryl-undecaprenol N-acetylglucosamine transferase.